A 127-amino-acid chain; its full sequence is Fluoride-specific ion channel FluC (127 aa).

Transmembrane regions (helical) follow at residues 4-24 (LLLAVFIGGGTGSVARWLLSM), 35-55 (LGTLAANLIGAFIIGMGFAWF), 71-91 (TGFCGGLTTFSTFSAEVVFLL), and 103-123 (VFVNLLGSFAMTALAFWLFSA). Residues G75 and T78 each contribute to the Na(+) site.

Belongs to the fluoride channel Fluc/FEX (TC 1.A.43) family.

It localises to the cell inner membrane. The enzyme catalyses fluoride(in) = fluoride(out). With respect to regulation, na(+) is not transported, but it plays an essential structural role and its presence is essential for fluoride channel function. In terms of biological role, fluoride-specific ion channel. Important for reducing fluoride concentration in the cell, thus reducing its toxicity. The polypeptide is Fluoride-specific ion channel FluC (Escherichia coli O81 (strain ED1a)).